Here is a 132-residue protein sequence, read N- to C-terminus: Fluoride-specific ion channel FluC 2 (132 aa).

A run of 4 helical transmembrane segments spans residues 12-32, 41-61, 65-85, and 96-116; these read LTEL…RWQL, LLVN…PVAP, LLVG…MLAA, and AALG…ALGF. The Na(+) site is built by G73 and T76.

This sequence belongs to the fluoride channel Fluc/FEX (TC 1.A.43) family.

The protein resides in the cell inner membrane. It carries out the reaction fluoride(in) = fluoride(out). Na(+) is not transported, but it plays an essential structural role and its presence is essential for fluoride channel function. Functionally, fluoride-specific ion channel. Important for reducing fluoride concentration in the cell, thus reducing its toxicity. The chain is Fluoride-specific ion channel FluC 2 from Parasynechococcus marenigrum (strain WH8102).